Here is a 386-residue protein sequence, read N- to C-terminus: RNA polymerase sigma factor SigA (386 aa).

A sigma-70 factor domain-2 region spans residues 154–224 (LAEANLRLVV…TRAIADQART (71 aa)). Residues 178 to 181 (DLIQ) carry the Interaction with polymerase core subunit RpoC motif. A sigma-70 factor domain-3 region spans residues 233 to 309 (ETINKLIRVQ…DDVIESPVDY (77 aa)). Positions 322 to 375 (VMDTLTDREENVLRMRFGLDDGRMHTLEDVGKQFKVTRERIRQIEAKAIKKLRH) are sigma-70 factor domain-4. Residues 348–367 (LEDVGKQFKVTRERIRQIEA) constitute a DNA-binding region (H-T-H motif).

Belongs to the sigma-70 factor family. RpoD/SigA subfamily. In terms of assembly, interacts transiently with the RNA polymerase catalytic core.

The protein resides in the cytoplasm. In terms of biological role, sigma factors are initiation factors that promote the attachment of RNA polymerase to specific initiation sites and are then released. This sigma factor is the primary sigma factor during exponential growth. This is RNA polymerase sigma factor SigA from Lactococcus lactis subsp. lactis (strain IL1403) (Streptococcus lactis).